A 357-amino-acid polypeptide reads, in one-letter code: Peptide chain release factor 1 (357 aa).

Q234 carries the N5-methylglutamine modification.

The protein belongs to the prokaryotic/mitochondrial release factor family. Methylated by PrmC. Methylation increases the termination efficiency of RF1.

It localises to the cytoplasm. Peptide chain release factor 1 directs the termination of translation in response to the peptide chain termination codons UAG and UAA. In Lactococcus lactis subsp. cremoris (strain MG1363), this protein is Peptide chain release factor 1.